A 79-amino-acid chain; its full sequence is Protein NOI4 (79 aa).

Residues 31–68 (KARDEKKTGGKPGSPGKSSEGHVKSGGGDPSKPQPKKW) form a disordered region. Ser44 is subject to Phosphoserine.

Belongs to the RIN4 family. Proteolytic cleaved by P.syringae pv tomato AvrRpt2 after Gly-12; this cleavage is critical for subsequent proteasome-dependent elimination.

The sequence is that of Protein NOI4 from Arabidopsis thaliana (Mouse-ear cress).